A 550-amino-acid polypeptide reads, in one-letter code: Amino acid transporter AVT1D (550 aa).

Residues 1–16 are compositionally biased toward basic and acidic residues; that stretch reads MKLDEEFLHDRDHSFL. The segment at 1-99 is disordered; that stretch reads MKLDEEFLHD…FMPQSSSRRL (99 aa). Over residues 84 to 99 the composition is skewed to polar residues; it reads TPPSVSFMPQSSSRRL. The next 11 membrane-spanning stretches (helical) occupy residues 164–184, 189–209, 236–256, 264–286, 308–328, 345–365, 375–395, 424–444, 459–479, 481–501, and 521–541; these read SVLNGTNVLCGLGLITMPYAI, WLGLPILLFFGVITCYTGVLM, FIISILLYVELYAACVEYIIM, LFPNVSLSIASGISLDSPQIFAI, SVGGVLASILLGICLFWVGAV, LPVTIGIFGFGYSGHSVFPNI, FPLVLVICFSFCTVLYIAVAV, VWTAVITPMTKYALTITPIVM, GVSILFRTMLVTSTLVVALSV, FFAIVAALIGSFLAMLVALIF, and LCIFIIVFGVVSGCCGTYSAI.

The protein belongs to the amino acid/polyamine transporter 2 family. Amino acid/auxin permease (AAAP) (TC 2.A.18.5) subfamily.

It localises to the membrane. The chain is Amino acid transporter AVT1D from Arabidopsis thaliana (Mouse-ear cress).